The sequence spans 163 residues: 6,7-dimethyl-8-ribityllumazine synthase (163 aa).

Residues phenylalanine 27, 58-60 (ALE), and 87-89 (CVV) each bind 5-amino-6-(D-ribitylamino)uracil. (2S)-2-hydroxy-3-oxobutyl phosphate is bound at residue 92–93 (DT). The active-site Proton donor is the histidine 95. Position 120 (asparagine 120) interacts with 5-amino-6-(D-ribitylamino)uracil. Position 134 (arginine 134) interacts with (2S)-2-hydroxy-3-oxobutyl phosphate.

The protein belongs to the DMRL synthase family.

It carries out the reaction (2S)-2-hydroxy-3-oxobutyl phosphate + 5-amino-6-(D-ribitylamino)uracil = 6,7-dimethyl-8-(1-D-ribityl)lumazine + phosphate + 2 H2O + H(+). Its pathway is cofactor biosynthesis; riboflavin biosynthesis; riboflavin from 2-hydroxy-3-oxobutyl phosphate and 5-amino-6-(D-ribitylamino)uracil: step 1/2. In terms of biological role, catalyzes the formation of 6,7-dimethyl-8-ribityllumazine by condensation of 5-amino-6-(D-ribitylamino)uracil with 3,4-dihydroxy-2-butanone 4-phosphate. This is the penultimate step in the biosynthesis of riboflavin. The sequence is that of 6,7-dimethyl-8-ribityllumazine synthase from Rhodopseudomonas palustris (strain BisA53).